Consider the following 271-residue polypeptide: Sedoheptulose 1,7-bisphosphatase (271 aa).

A substrate-binding site is contributed by Arg-12. The active-site Tele-phosphohistidine intermediate is His-13. Substrate contacts are provided by residues 24–25 (YT), Arg-69, 99–102 (EWEY), Arg-181, and His-244. Glu-99 (proton donor/acceptor) is an active-site residue.

Belongs to the phosphoglycerate mutase family. SHB17 subfamily. In terms of assembly, homodimer.

It localises to the cytoplasm. The protein localises to the nucleus. The enzyme catalyses D-sedoheptulose 1,7-bisphosphate + H2O = D-sedoheptulose 7-phosphate + phosphate. In terms of biological role, sedoheptulose 1,7-bisphosphatase involved in riboneogenesis. Dephosphorylates sedoheptulose 1,7-bisphosphate (SBP), which is converted via the non-oxidative pentose phosphate pathway to ribose-5-phosphate. Has a fructose 1,6-bisphosphatase activity in vitro, but this is probably not biologically relevant, since deletion does not affect fructose 1,6-biphosphate (FBP) levels. In Saccharomyces cerevisiae (strain ATCC 204508 / S288c) (Baker's yeast), this protein is Sedoheptulose 1,7-bisphosphatase (SHB17).